A 349-amino-acid polypeptide reads, in one-letter code: Protein RecA (349 aa).

64–71 is a binding site for ATP; it reads GPESSGKT. The tract at residues 328 to 349 is disordered; that stretch reads NGEIEVEAPSEEEFEDLPLDLK. Over residues 331–349 the composition is skewed to acidic residues; that stretch reads IEVEAPSEEEFEDLPLDLK.

The protein belongs to the RecA family.

It localises to the cytoplasm. Can catalyze the hydrolysis of ATP in the presence of single-stranded DNA, the ATP-dependent uptake of single-stranded DNA by duplex DNA, and the ATP-dependent hybridization of homologous single-stranded DNAs. It interacts with LexA causing its activation and leading to its autocatalytic cleavage. This chain is Protein RecA, found in Halalkalibacterium halodurans (strain ATCC BAA-125 / DSM 18197 / FERM 7344 / JCM 9153 / C-125) (Bacillus halodurans).